The sequence spans 311 residues: Ribosomal RNA small subunit methyltransferase H (311 aa).

Residues 33–35 (AGH), Asp-53, Phe-80, Asp-101, and Gln-108 contribute to the S-adenosyl-L-methionine site.

Belongs to the methyltransferase superfamily. RsmH family.

The protein resides in the cytoplasm. The enzyme catalyses cytidine(1402) in 16S rRNA + S-adenosyl-L-methionine = N(4)-methylcytidine(1402) in 16S rRNA + S-adenosyl-L-homocysteine + H(+). Functionally, specifically methylates the N4 position of cytidine in position 1402 (C1402) of 16S rRNA. This chain is Ribosomal RNA small subunit methyltransferase H, found in Alkaliphilus oremlandii (strain OhILAs) (Clostridium oremlandii (strain OhILAs)).